The primary structure comprises 1193 residues: MKIKFINYLLLFFIIFLNYNGFVKSDCYQELDLVLSNSCRNGPSKLVIHESIYSFESIELTPFVQPKLLNYYSWDLQDGINYFISYRYKNCSNIISKPFASKGMYYKLLAEPLCLNTYIPVRVYNWGAGGIEYNFYSVPSTIWVNSQNGLCSFQSPISPQSYTKGVLNDGALKFVGPTCGFKNGTITIDLTKGYSNYHLFLQSDYLFDNEIQPSSEGFYNGLESENYSLFVDSEQCATERIEIYMKDVFAPLEIDFENVPDLFHNSTISLSLSSGNNGILNNTNINAFVIQSERLLTDWNHVQTQITSNTYYGYAYNKDFSTEAGQTKCVYSETLLFDNYSPNFNFTISKSESCLENVSITFYPLPNQNIKVYDYSSESGIPFSMKDNVLSVENNLNLWIFDTNQNYGIVHSTVFDIPSYKIIETSNGIGCWKTYNITIVNYENYKNLRIHFYNENSEFNFYPVEGVFINVPALYYYVTYNAGDCETESYFVIDKLDRNTPMDNVVLEFNTLEIGNCTHETSFMVTVKSVFGSYSKTMQTFYDKEFTIFLPNCSCQINGIYVAPRLIDGDSLIYELLTDPNCNSTDTLIRFTSPSQDYSISSVYQNGVQLQYYNNLNGYYISSGENNITVNYEGDQYCYRTETITIQSVYEVPLVQITPVSDCRNPNGKIEISNFQIFYNLELVFNSNSKPINQGFIENLASGTYTINYYSNQTCINSITVYVPSSENVAEITTSVISNPTCDNGPFSDGMIRVALKYEGNQINNFTIQNQDAEFTYLNDGVYPIAGVGVNSLTISYLSCIWKRDITTVLNKPSFTLEKVFNDTCDLQSVYKLVSSNPNIEIDYIDSSNGFSYLNNYYLVFQNSGDFGYYVAWNSRCYEYYTQQIIMDNYDRDSNVKYIDYEIVKPDNCNSLKIDLIITNMNKFISLTIENKLPTPINSTHSIFKNLPPSKSYDILYTLLNGCVAYQTVGIDEFKSGFTKETIDIIKTSDICYSGKASIQLSNLDFDNYYYYIKNSNSLMGVTDSYDSIQPQQSGNINGTILLSNYNPGSYKIYRGCKSMANCYLETNVVIESEDPIIESISVTDSYDKLNNGTVEIKLNYNSPYPINFKIIGTQLSNQNGKFGNLTPKTYEVQVTLTDRMCPVTLSKSFTINLKTSPPTPSPQDPSDELSTSSFVQVNLLFLSILIFTIFIF.

An N-terminal signal peptide occupies residues 1–25 (MKIKFINYLLLFFIIFLNYNGFVKS). Residues 26–1172 (DCYQELDLVL…PQDPSDELST (1147 aa)) lie on the Extracellular side of the membrane. 18 N-linked (GlcNAc...) asparagine glycosylation sites follow: N90, N183, N226, N265, N281, N345, N357, N436, N516, N552, N583, N627, N712, N765, N822, N938, N1038, and N1092. Residues 1173-1193 (SSFVQVNLLFLSILIFTIFIF) form a helical membrane-spanning segment.

It localises to the membrane. This is an uncharacterized protein from Dictyostelium discoideum (Social amoeba).